We begin with the raw amino-acid sequence, 94 residues long: Prepro-gonadotropin-releasing hormone-like protein (94 aa).

Residues 1-21 (MNACILLTTLVTMITIEKVQG) form the signal peptide.

Its subcellular location is the secreted. Neuropeptide involved in reproduction. May be an important hormone in the regulation of gonadal maturation. The sequence is that of Prepro-gonadotropin-releasing hormone-like protein from Ruditapes philippinarum (Japanese carpet shell).